A 503-amino-acid polypeptide reads, in one-letter code: Cytosol aminopeptidase (503 aa).

2 residues coordinate Mn(2+): K269 and D274. K281 is an active-site residue. Residues D292, D351, and E353 each coordinate Mn(2+). R355 is an active-site residue.

It belongs to the peptidase M17 family. Mn(2+) serves as cofactor.

The protein localises to the cytoplasm. It catalyses the reaction Release of an N-terminal amino acid, Xaa-|-Yaa-, in which Xaa is preferably Leu, but may be other amino acids including Pro although not Arg or Lys, and Yaa may be Pro. Amino acid amides and methyl esters are also readily hydrolyzed, but rates on arylamides are exceedingly low.. It carries out the reaction Release of an N-terminal amino acid, preferentially leucine, but not glutamic or aspartic acids.. Presumably involved in the processing and regular turnover of intracellular proteins. Catalyzes the removal of unsubstituted N-terminal amino acids from various peptides. In Vibrio cholerae serotype O1 (strain ATCC 39541 / Classical Ogawa 395 / O395), this protein is Cytosol aminopeptidase.